The chain runs to 45 residues: Putative purine permease 9 (45 aa).

As to expression, not detected in seedlings, leaves, embryos or root and shoot meristems.

The protein is Putative purine permease 9 of Arabidopsis thaliana (Mouse-ear cress).